Reading from the N-terminus, the 426-residue chain is Tyrosine--tRNA ligase (426 aa).

Tyr38 is an L-tyrosine binding site. The 'HIGH' region motif lies at 43-52 (PTADSLHIGS). 2 residues coordinate L-tyrosine: Tyr176 and Gln180. Positions 236–240 (KFGKT) match the 'KMSKS' region motif. Position 239 (Lys239) interacts with ATP. In terms of domain architecture, S4 RNA-binding spans 359-426 (QTIVEVLTQS…KKLFNLYIWK (68 aa)).

It belongs to the class-I aminoacyl-tRNA synthetase family. TyrS type 1 subfamily. In terms of assembly, homodimer.

It localises to the cytoplasm. It carries out the reaction tRNA(Tyr) + L-tyrosine + ATP = L-tyrosyl-tRNA(Tyr) + AMP + diphosphate + H(+). Functionally, catalyzes the attachment of tyrosine to tRNA(Tyr) in a two-step reaction: tyrosine is first activated by ATP to form Tyr-AMP and then transferred to the acceptor end of tRNA(Tyr). This is Tyrosine--tRNA ligase from Aliivibrio salmonicida (strain LFI1238) (Vibrio salmonicida (strain LFI1238)).